The primary structure comprises 209 residues: Uracil phosphoribosyltransferase (209 aa).

5-phospho-alpha-D-ribose 1-diphosphate-binding positions include Arg-79, Arg-104, and 131-139 (DPMLATGGS). Uracil-binding positions include Val-194 and 199 to 201 (GDA). Residue Asp-200 coordinates 5-phospho-alpha-D-ribose 1-diphosphate.

Belongs to the UPRTase family. Requires Mg(2+) as cofactor.

It catalyses the reaction UMP + diphosphate = 5-phospho-alpha-D-ribose 1-diphosphate + uracil. It functions in the pathway pyrimidine metabolism; UMP biosynthesis via salvage pathway; UMP from uracil: step 1/1. Allosterically activated by GTP. Functionally, catalyzes the conversion of uracil and 5-phospho-alpha-D-ribose 1-diphosphate (PRPP) to UMP and diphosphate. In Bacillus cereus (strain Q1), this protein is Uracil phosphoribosyltransferase.